The primary structure comprises 417 residues: Signal recognition particle receptor FtsY (417 aa).

Residues 228-235 (GINGTGKT), 310-314 (DTAGR), and 368-371 (TKID) each bind GTP.

It belongs to the GTP-binding SRP family. FtsY subfamily. As to quaternary structure, part of the signal recognition particle protein translocation system, which is composed of SRP and FtsY.

The protein resides in the cell membrane. Its subcellular location is the cytoplasm. The catalysed reaction is GTP + H2O = GDP + phosphate + H(+). Its function is as follows. Involved in targeting and insertion of nascent membrane proteins into the cytoplasmic membrane. Acts as a receptor for the complex formed by the signal recognition particle (SRP) and the ribosome-nascent chain (RNC). The polypeptide is Signal recognition particle receptor FtsY (Methanosarcina acetivorans (strain ATCC 35395 / DSM 2834 / JCM 12185 / C2A)).